The following is a 426-amino-acid chain: Trigger factor (426 aa).

The 81-residue stretch at glycine 160–proline 240 folds into the PPIase FKBP-type domain.

This sequence belongs to the FKBP-type PPIase family. Tig subfamily.

The protein localises to the cytoplasm. The catalysed reaction is [protein]-peptidylproline (omega=180) = [protein]-peptidylproline (omega=0). Its function is as follows. Involved in protein export. Acts as a chaperone by maintaining the newly synthesized protein in an open conformation. Functions as a peptidyl-prolyl cis-trans isomerase. The protein is Trigger factor of Chlorobaculum tepidum (strain ATCC 49652 / DSM 12025 / NBRC 103806 / TLS) (Chlorobium tepidum).